The sequence spans 317 residues: Melanocyte-stimulating hormone receptor (317 aa).

The Extracellular segment spans residues 1 to 37 (MAVQGSQRRLLGSLNSTPTAIPQLGLAANQTGARCLE). N-linked (GlcNAc...) asparagine glycosylation is present at asparagine 29. Residues 38-63 (VSISDGLFLSLGLVSLVENALVVATI) form a helical membrane-spanning segment. Residues 64–72 (AKNRNLHSP) lie on the Cytoplasmic side of the membrane. Residues 73–93 (MYCFICCLALSDLLVSGSNVL) traverse the membrane as a helical segment. Residues 94–118 (ETAVILLLEAGALVARAAVLQQLDN) are Extracellular-facing. Residues 119–140 (VIDVITCSSMLSSLCFLGAIAV) form a helical membrane-spanning segment. At 141-163 (DRYISIFYALRYHSIVTLPRARR) the chain is on the cytoplasmic side. The chain crosses the membrane as a helical span at residues 164–183 (AVAAIWVASVVFSTLFIAYY). Residues 184-191 (DHVAVLLC) are Extracellular-facing. The helical transmembrane segment at 192–211 (LVVFFLAMLVLMAVLYVHML) threads the bilayer. The Cytoplasmic segment spans residues 212–240 (ARACQHAQGIARLHKRQRPVHQGFGLKGA). Residues 241-266 (VTLTILLGIFFLCWGPFFLHLTLIVL) traverse the membrane as a helical segment. Topologically, residues 267–279 (CPEHPTCGCIFKN) are extracellular. A helical membrane pass occupies residues 280-300 (FNLFLALIICNAIIDPLIYAF). At 301–317 (HSQELRRTLKEVLTCSW) the chain is on the cytoplasmic side. Cysteine 315 carries S-palmitoyl cysteine lipidation.

This sequence belongs to the G-protein coupled receptor 1 family. As to quaternary structure, interacts with MGRN1, but does not undergo MGRN1-mediated ubiquitination; this interaction competes with GNAS-binding and thus inhibits agonist-induced cAMP production. Interacts with OPN3; the interaction results in a decrease in MC1R-mediated cAMP signaling and ultimately a decrease in melanin production in melanocytes. In terms of tissue distribution, expressed in melanocytes. Expressed in corticoadrenal tissue.

It localises to the cell membrane. In terms of biological role, receptor for MSH (alpha, beta and gamma) and ACTH. The activity of this receptor is mediated by G proteins which activate adenylate cyclase. Mediates melanogenesis, the production of eumelanin (black/brown) and phaeomelanin (red/yellow), via regulation of cAMP signaling in melanocytes. This is Melanocyte-stimulating hormone receptor (MC1R) from Homo sapiens (Human).